A 383-amino-acid chain; its full sequence is Lipid-A-disaccharide synthase (383 aa).

Belongs to the LpxB family.

It carries out the reaction 2-N,3-O-bis[(3R)-3-hydroxytetradecanoyl]-alpha-D-glucosaminyl 1-phosphate + UDP-2-N,3-O-bis[(3R)-3-hydroxytetradecanoyl]-alpha-D-glucosamine = lipid A disaccharide (E. coli) + UDP + H(+). It catalyses the reaction a lipid X + a UDP-2-N,3-O-bis[(3R)-3-hydroxyacyl]-alpha-D-glucosamine = a lipid A disaccharide + UDP + H(+). Its pathway is glycolipid biosynthesis; lipid IV(A) biosynthesis; lipid IV(A) from (3R)-3-hydroxytetradecanoyl-[acyl-carrier-protein] and UDP-N-acetyl-alpha-D-glucosamine: step 5/6. Condensation of UDP-2,3-diacylglucosamine and 2,3-diacylglucosamine-1-phosphate to form lipid A disaccharide, a precursor of lipid A, a phosphorylated glycolipid that anchors the lipopolysaccharide to the outer membrane of the cell. The sequence is that of Lipid-A-disaccharide synthase from Klebsiella pneumoniae (strain 342).